The sequence spans 369 residues: Flagellar P-ring protein (369 aa).

The N-terminal stretch at 1–23 (MRIASFFTVLLTLLTLNITPASA) is a signal peptide.

The protein belongs to the FlgI family. As to quaternary structure, the basal body constitutes a major portion of the flagellar organelle and consists of four rings (L,P,S, and M) mounted on a central rod.

The protein localises to the periplasm. It is found in the bacterial flagellum basal body. Functionally, assembles around the rod to form the L-ring and probably protects the motor/basal body from shearing forces during rotation. The protein is Flagellar P-ring protein of Pectobacterium atrosepticum (strain SCRI 1043 / ATCC BAA-672) (Erwinia carotovora subsp. atroseptica).